Here is a 348-residue protein sequence, read N- to C-terminus: Nicotinate-nucleotide--dimethylbenzimidazole phosphoribosyltransferase (348 aa).

The active-site Proton acceptor is the Glu316.

Belongs to the CobT family.

It carries out the reaction 5,6-dimethylbenzimidazole + nicotinate beta-D-ribonucleotide = alpha-ribazole 5'-phosphate + nicotinate + H(+). The protein operates within nucleoside biosynthesis; alpha-ribazole biosynthesis; alpha-ribazole from 5,6-dimethylbenzimidazole: step 1/2. Catalyzes the synthesis of alpha-ribazole-5'-phosphate from nicotinate mononucleotide (NAMN) and 5,6-dimethylbenzimidazole (DMB). The sequence is that of Nicotinate-nucleotide--dimethylbenzimidazole phosphoribosyltransferase from Xanthomonas campestris pv. campestris (strain B100).